The chain runs to 79 residues: Pulmonary surfactant-associated protein B (79 aa).

A Saposin B-type domain is found at 4–79 (PLPFCWLCRT…VCGLVLRCSS (76 aa)). 3 disulfides stabilise this stretch: Cys8-Cys77, Cys11-Cys71, and Cys35-Cys46.

In terms of assembly, homodimer; disulfide-linked.

It localises to the secreted. The protein resides in the extracellular space. Its subcellular location is the surface film. Pulmonary surfactant-associated proteins promote alveolar stability by lowering the surface tension at the air-liquid interface in the peripheral air spaces. SP-B increases the collapse pressure of palmitic acid to nearly 70 millinewtons per meter. This Sus scrofa (Pig) protein is Pulmonary surfactant-associated protein B (SFTPB).